The chain runs to 720 residues: DNA gyrase subunit B (720 aa).

Residues 1-26 (MVDAMPENPAEEPTAASAAPNPEAVP) are compositionally biased toward low complexity. The tract at residues 1 to 42 (MVDAMPENPAEEPTAASAAPNPEAVPDAVGQPEAPVKDRKVP) is disordered. Residues 498–612 (CEVYIVEGDS…AGHVFLAQPP (115 aa)) form the Toprim domain. The Mg(2+) site is built by Glu504, Asp577, and Asp579.

This sequence belongs to the type II topoisomerase GyrB family. In terms of assembly, heterotetramer, composed of two GyrA and two GyrB chains. In the heterotetramer, GyrA contains the active site tyrosine that forms a transient covalent intermediate with the DNA, while GyrB binds cofactors and catalyzes ATP hydrolysis. The cofactor is Mg(2+). It depends on Mn(2+) as a cofactor. Requires Ca(2+) as cofactor.

Its subcellular location is the cytoplasm. The catalysed reaction is ATP-dependent breakage, passage and rejoining of double-stranded DNA.. Its activity is regulated as follows. Supercoiling activity inhibited by novobiocin and coumermycin, DNA wrapping around gyrase is not inhibited. In terms of biological role, a type II topoisomerase that negatively supercoils DNA in an ATP-dependent manner. About 140 bp of DNA wraps around gyrase in the presence or absence of ATP, when ATP is added negative supercoils are made. A type II topoisomerase that negatively supercoils closed circular double-stranded (ds) DNA in an ATP-dependent manner to modulate DNA topology and maintain chromosomes in an underwound state. Negative supercoiling favors strand separation, and DNA replication, transcription, recombination and repair, all of which involve strand separation. Also able to catalyze the interconversion of other topological isomers of dsDNA rings, including catenanes and knotted rings. Type II topoisomerases break and join 2 DNA strands simultaneously in an ATP-dependent manner. This chain is DNA gyrase subunit B, found in Micrococcus luteus (strain ATCC 4698 / DSM 20030 / JCM 1464 / CCM 169 / CCUG 5858 / IAM 1056 / NBRC 3333 / NCIMB 9278 / NCTC 2665 / VKM Ac-2230) (Micrococcus lysodeikticus).